We begin with the raw amino-acid sequence, 542 residues long: Probable serine/threonine-protein kinase ndrB (542 aa).

The disordered stretch occupies residues 1 to 52 (MNVERKLESLSLQQQQQEEQQDESEQPNQGVEDEEEEEYDEEEYEEEEEDIN). The span at 9-18 (SLSLQQQQQE) shows a compositional bias: low complexity. Acidic residues predominate over residues 19-51 (EQQDESEQPNQGVEDEEEEEYDEEEYEEEEEDI). Residues 130-437 (FESIRIIGRG…VEEIQSHPFF (308 aa)) form the Protein kinase domain. Residues 136 to 144 (IGRGAFGEV) and Lys159 contribute to the ATP site. Asp258 (proton acceptor) is an active-site residue. The region spanning 438 to 510 (KGVDWRRLRE…RNFDAMRDAF (73 aa)) is the AGC-kinase C-terminal domain. The tract at residues 452-486 (IIPQLSSPTDTSNFDHYEEEQQPEPMQPVQSKSRR) is disordered. The span at 455–465 (QLSSPTDTSNF) shows a compositional bias: polar residues.

It belongs to the protein kinase superfamily. AGC Ser/Thr protein kinase family.

The protein resides in the cytoplasm. It carries out the reaction L-seryl-[protein] + ATP = O-phospho-L-seryl-[protein] + ADP + H(+). It catalyses the reaction L-threonyl-[protein] + ATP = O-phospho-L-threonyl-[protein] + ADP + H(+). This is Probable serine/threonine-protein kinase ndrB (ndrB) from Dictyostelium discoideum (Social amoeba).